We begin with the raw amino-acid sequence, 169 residues long: uncharacterized protein (169 aa).

This is an uncharacterized protein from Saccharomyces cerevisiae (strain ATCC 204508 / S288c) (Baker's yeast).